Here is a 185-residue protein sequence, read N- to C-terminus: Acireductone dioxygenase (185 aa).

H97, H99, E103, and H141 together coordinate Fe(2+). Ni(2+) is bound by residues H97, H99, E103, and H141.

It belongs to the acireductone dioxygenase (ARD) family. In terms of assembly, monomer. It depends on Fe(2+) as a cofactor. Ni(2+) serves as cofactor.

The catalysed reaction is 1,2-dihydroxy-5-(methylsulfanyl)pent-1-en-3-one + O2 = 3-(methylsulfanyl)propanoate + CO + formate + 2 H(+). The enzyme catalyses 1,2-dihydroxy-5-(methylsulfanyl)pent-1-en-3-one + O2 = 4-methylsulfanyl-2-oxobutanoate + formate + 2 H(+). Its pathway is amino-acid biosynthesis; L-methionine biosynthesis via salvage pathway; L-methionine from S-methyl-5-thio-alpha-D-ribose 1-phosphate: step 5/6. In terms of biological role, catalyzes 2 different reactions between oxygen and the acireductone 1,2-dihydroxy-3-keto-5-methylthiopentene (DHK-MTPene) depending upon the metal bound in the active site. Fe-containing acireductone dioxygenase (Fe-ARD) produces formate and 2-keto-4-methylthiobutyrate (KMTB), the alpha-ketoacid precursor of methionine in the methionine recycle pathway. Ni-containing acireductone dioxygenase (Ni-ARD) produces methylthiopropionate, carbon monoxide and formate, and does not lie on the methionine recycle pathway. This is Acireductone dioxygenase from Stenotrophomonas maltophilia (strain K279a).